A 218-amino-acid polypeptide reads, in one-letter code: Small ribosomal subunit protein uS3c (218 aa).

Residues 43–118 (IKNYVQKNTR…KLNIAITRIG (76 aa)) enclose the KH type-2 domain.

The protein belongs to the universal ribosomal protein uS3 family. In terms of assembly, part of the 30S ribosomal subunit.

Its subcellular location is the plastid. It localises to the chloroplast. This chain is Small ribosomal subunit protein uS3c (rps3), found in Gossypium barbadense (Sea Island cotton).